The following is a 220-amino-acid chain: Thiopurine S-methyltransferase (220 aa).

4 residues coordinate S-adenosyl-L-methionine: Trp10, Leu45, Glu66, and Arg123.

This sequence belongs to the class I-like SAM-binding methyltransferase superfamily. TPMT family.

It localises to the cytoplasm. The catalysed reaction is S-adenosyl-L-methionine + a thiopurine = S-adenosyl-L-homocysteine + a thiopurine S-methylether.. This chain is Thiopurine S-methyltransferase, found in Pseudomonas syringae pv. syringae (strain B728a).